Reading from the N-terminus, the 320-residue chain is Nucleotide-binding protein Pcryo_0127 (320 aa).

32–39 (GRSGSGKT) lines the ATP pocket. GTP is bound at residue 82-85 (DIRT).

The protein belongs to the RapZ-like family.

Functionally, displays ATPase and GTPase activities. This chain is Nucleotide-binding protein Pcryo_0127, found in Psychrobacter cryohalolentis (strain ATCC BAA-1226 / DSM 17306 / VKM B-2378 / K5).